A 3790-amino-acid chain; its full sequence is Transcription-associated protein 1 (3790 aa).

HEAT repeat units lie at residues Arg98–Pro136, Thr335–Gln381, Asp740–Leu778, Ala1185–Lys1223, Ile1332–Leu1370, and Ala1826–Leu1864. Residues Leu2610–Thr3173 form the FAT domain. The 325-residue stretch at Met3429–Asn3753 folds into the PI3K/PI4K catalytic domain. The G-loop stretch occupies residues Val3435–Ala3441. The tract at residues Asn3616 to Met3624 is catalytic loop. The tract at residues Ile3636 to Thr3661 is activation loop. The FATC domain maps to Phe3758–Leu3790.

This sequence belongs to the PI3/PI4-kinase family. TRA1 subfamily. As to quaternary structure, component of the Tip60 chromatin-remodeling complex which contains the catalytic subunit Tip60 and the subunits Domino, Tra1, Brd8, E(Pc), DMAP1, Pontin, Reptin, Ing3, Act87E, BAP55, Mrg15, MrgBP, Gas41 and YL-1. Probable component of some SAGA complex. Interacts with Spt3, Gcn5, Ada3 and Ada2b. As to expression, ubiquitous.

Its subcellular location is the nucleus. The protein localises to the cytoplasm. It localises to the chromosome. In terms of biological role, part of the Tip60 chromatin-remodeling complex which is involved in DNA repair. Upon induction of DNA double-strand breaks, this complex acetylates phosphorylated H2AV in nucleosomes and exchanges it with unmodified H2AV. During wing development, required for activity of Notch and its coactivator mam. Function in promoting mam function is likely to involve both the Tip60 and SAGA complexes. This is Transcription-associated protein 1 (Nipped-A) from Drosophila melanogaster (Fruit fly).